The chain runs to 166 residues: uncharacterized protein (166 aa).

Pentapeptide repeat domains lie at 38-77 (GECL…NLRR), 78-117 (ALLD…NLER), and 118-157 (SFLR…EFWE).

This is an uncharacterized protein from Synechocystis sp. (strain ATCC 27184 / PCC 6803 / Kazusa).